The following is a 144-amino-acid chain: Ribosomally synthesized cyclic peptide phomopsin precursor phomA' (144 aa).

Residues 1–18 form the signal peptide; it reads MRFTPAIVIAAFCSLAVA. 9 consecutive propeptides follow at residues 19 to 35, 42 to 50, 57 to 65, 72 to 79, 86 to 94, 101 to 108, 115 to 123, 130 to 137, and Lys-144; these read APAA…AVED, KKRGEAVED, and KRGEAVED.

Post-translationally, phomA' is processed by several endopeptidases including kexin proteases as well as the cluster-specific S41 family peptidase phomP1' and the peptidase phomG' to produce 5 identical copies of the hexapeptide Tyr-Val-Ile-Pro-Ile-Asp and 3 identical copies of Tyr-Val-Ile-Pro-Phe-Asp, that are further modified into phomapsins A and P, respectively. The timing and order of proteolysis of the phomA' precursor and PTMs are still unknown. Two tyrosinase-like enzyme phomQ1' and PhomQ2, catalyze the chlorination and hydroxylation of Tyr, respectively. PhomYb', is proposed to be involved in the construction of the macrocyclic structure. The other four ustYa family proteins may be involved in PTMs that generate the unique structure of phomopsin A. PhomYa' is required for the hydroxylation of C-beta of Tyr. PhomYc', PhomYd', and PhomYe' are responsible for the biosynthesis of 2,3-dehydroisoleucine (dIle), 2,3-dehydroaspartic acid (dAsp), and 3,4-dehydroproline (dPro), respectively. While dIle formation by phomYc is indispensable for the installation of dAsp by phomYd, the order of the other PTMs have not been elucidated yet. Most of the biosynthetic enzymes likely have broad substrate specificity, and thus, there might be a metabolic grid from a precursor to phomopsin A. The enzyme(s) responsible for the biosynthesis of 3,4-dehydrovaline (dVal) have also not been identified yet. Finally, PhomM' acts as an S-adenosylmethionine-dependent alpha-N-methyltransferase that catalyzes two successive N-methylation reactions, converting N-desmethyl-phomopsin A to phomopsin A and phomopsin A further to an N,N-dimethylated congener called phomopsin E.

Its pathway is mycotoxin biosynthesis. Its function is as follows. Ribosomally synthesized cyclic peptide phomopsin precursor; part of the gene cluster that mediates the biosynthesis of the phomopsins, a group of hexapeptide mycotoxins which infects lupins and causes lupinosis disease in livestock. The phomA' translated product contains a 5-fold repeated peptide embedding the hexapeptide Tyr-Val-Ile-Pro-Ile-Asp and a 3-fold repeated peptide embedding the hexapeptide Tyr-Val-Ile-Pro-Phe-Asp, that is converted into phomapsin A and phomapsin P, respectively. After being excised from the precursor peptide by kexin proteases, the core peptides are cyclized and modified post-translationally by enzymes encoded within the corresponding gene cluster. The protein is Ribosomally synthesized cyclic peptide phomopsin precursor phomA' of Diaporthe leptostromiformis (Lupinosis disease fungus).